The sequence spans 383 residues: Peroxisomal membrane protein PEX15 (383 aa).

Residues 1–331 (MAASEIMNNL…AVLKHHFTRS (331 aa)) are Cytoplasmic-facing. Residues 332–349 (VLNKNGLLLTGLLLLLCL) traverse the membrane as a helical segment. Residues 350–383 (KKYKSLMAIFKHVPAAFHTVYPQIVGLLKLLASI) are Lumenal-facing.

As to quaternary structure, interacts with PEX6. Interacts with PEX19; targets PEX15 to the peroxisome. In terms of processing, phosphorylated.

It is found in the peroxisome membrane. The protein resides in the endoplasmic reticulum membrane. Functionally, peroxisomal docking factor that anchors PEX1 and PEX6 to peroxisome membranes. PEX26 is therefore required for the formation of the PEX1-PEX6 AAA ATPase complex, a complex that mediates the extraction of the PEX5 receptor from peroxisomal membrane. The polypeptide is Peroxisomal membrane protein PEX15 (PEX15) (Saccharomyces cerevisiae (strain ATCC 204508 / S288c) (Baker's yeast)).